Reading from the N-terminus, the 96-residue chain is Small ribosomal subunit protein bS21 (96 aa).

Over residues 37 to 52 the composition is skewed to basic and acidic residues; the sequence is EKPSEKKAREKAEAVR. A disordered region spans residues 37–96; the sequence is EKPSEKKAREKAEAVRRARKLARKKLQREGLLPSKPKPVFGADRGRGAAGGAGGAPRPAR. Residues 53 to 62 are compositionally biased toward basic residues; that stretch reads RARKLARKKL.

It belongs to the bacterial ribosomal protein bS21 family.

The chain is Small ribosomal subunit protein bS21 from Afipia carboxidovorans (strain ATCC 49405 / DSM 1227 / KCTC 32145 / OM5) (Oligotropha carboxidovorans).